Reading from the N-terminus, the 339-residue chain is Anthranilate phosphoribosyltransferase (339 aa).

5-phospho-alpha-D-ribose 1-diphosphate contacts are provided by residues glycine 79, 82-83, threonine 87, 89-92, 107-115, and serine 119; these read GD, NIST, and KHGNRAVSS. Position 79 (glycine 79) interacts with anthranilate. Serine 91 contributes to the Mg(2+) binding site. Asparagine 110 contacts anthranilate. Anthranilate is bound at residue arginine 165. Aspartate 224 and glutamate 225 together coordinate Mg(2+).

The protein belongs to the anthranilate phosphoribosyltransferase family. As to quaternary structure, homodimer. It depends on Mg(2+) as a cofactor.

It catalyses the reaction N-(5-phospho-beta-D-ribosyl)anthranilate + diphosphate = 5-phospho-alpha-D-ribose 1-diphosphate + anthranilate. The protein operates within amino-acid biosynthesis; L-tryptophan biosynthesis; L-tryptophan from chorismate: step 2/5. Its function is as follows. Catalyzes the transfer of the phosphoribosyl group of 5-phosphorylribose-1-pyrophosphate (PRPP) to anthranilate to yield N-(5'-phosphoribosyl)-anthranilate (PRA). In Geobacillus thermodenitrificans (strain NG80-2), this protein is Anthranilate phosphoribosyltransferase.